Reading from the N-terminus, the 353-residue chain is tRNA pseudouridine synthase B (353 aa).

Aspartate 39 functions as the Nucleophile in the catalytic mechanism.

Belongs to the pseudouridine synthase TruB family. Type 1 subfamily.

It carries out the reaction uridine(55) in tRNA = pseudouridine(55) in tRNA. Functionally, responsible for synthesis of pseudouridine from uracil-55 in the psi GC loop of transfer RNAs. In Wolbachia pipientis subsp. Culex pipiens (strain wPip), this protein is tRNA pseudouridine synthase B.